The chain runs to 178 residues: Signaling threshold-regulating transmembrane adapter 1 (178 aa).

Residues M1–W23 lie on the Extracellular side of the membrane. An N-linked (GlcNAc...) asparagine glycan is attached at N6. The helical; Signal-anchor for type III membrane protein transmembrane segment at G24–L44 threads the bilayer. Over S45–S178 the chain is Cytoplasmic. Phosphoserine is present on residues S62 and S65. At Y72 the chain carries Phosphotyrosine. The interaction with GRB2 stretch occupies residues Y72–L75. The interval G81 to G102 is disordered. Phosphoserine is present on residues S84, S87, and S89. A Phosphotyrosine modification is found at Y109. At T126 the chain carries Phosphothreonine. The interval I128 to V133 is interaction with PTPN11. Phosphotyrosine occurs at positions 130 and 151. An interaction with CSK region spans residues Y151–V154. Residue S164 is modified to Phosphoserine. Y170 is subject to Phosphotyrosine. The interaction with GRB2 stretch occupies residues Y170 to S173.

Homodimer; disulfide-linked. When phosphorylated, interacts with PTPN11/SHP2, GRB2 and CSK. In terms of processing, phosphorylated on tyrosines upon TCR activation; which promotes recruitment of PTPN11, GRB2 and CSK. In terms of tissue distribution, lymph node, spleen and thymus.

It is found in the cell membrane. In terms of biological role, negatively regulates T-cell antigen receptor (TCR)-mediated signaling. Involved in positive selection of T-cells. This chain is Signaling threshold-regulating transmembrane adapter 1 (Sit1), found in Rattus norvegicus (Rat).